Reading from the N-terminus, the 397-residue chain is Glutamate 5-kinase (397 aa).

The segment at 1–28 (MVADLTSDISESQEQETETNSANNNGAV) is disordered. Lys40 provides a ligand contact to ATP. Positions 80, 168, and 180 each coordinate substrate. ATP contacts are provided by residues 200 to 201 (SD) and 243 to 249 (SGGMASK). A PUA domain is found at 306–383 (HGQVYIDQGA…QEIADILGYE (78 aa)).

Belongs to the glutamate 5-kinase family.

The protein resides in the cytoplasm. The enzyme catalyses L-glutamate + ATP = L-glutamyl 5-phosphate + ADP. It participates in amino-acid biosynthesis; L-proline biosynthesis; L-glutamate 5-semialdehyde from L-glutamate: step 1/2. In terms of biological role, catalyzes the transfer of a phosphate group to glutamate to form L-glutamate 5-phosphate. The sequence is that of Glutamate 5-kinase from Zymomonas mobilis subsp. mobilis (strain ATCC 31821 / ZM4 / CP4).